Consider the following 137-residue polypeptide: MLQPSRRKYRKEQKGRNTGIATRGAKVSFGEFGLKAIGRGRLTARQIESARRAMTRHIKRGGRIWIRIFPDKPISKKPAEVRMGNGKGNPEYWVAEIQPGKVLYEMDGVDETLAREAFRLAAAKLPLETVFVHRQMG.

This sequence belongs to the universal ribosomal protein uL16 family. In terms of assembly, part of the 50S ribosomal subunit.

Binds 23S rRNA and is also seen to make contacts with the A and possibly P site tRNAs. The protein is Large ribosomal subunit protein uL16 of Aromatoleum aromaticum (strain DSM 19018 / LMG 30748 / EbN1) (Azoarcus sp. (strain EbN1)).